Here is a 318-residue protein sequence, read N- to C-terminus: UDP-N-acetylenolpyruvoylglucosamine reductase (318 aa).

One can recognise an FAD-binding PCMH-type domain in the interval 38-204 (IGGVCPVIVE…LGIEILLKEG (167 aa)). Arg182 is a catalytic residue. Positions 212–229 (SLKDKRDRRNSSQPENKK) are enriched in basic and acidic residues. A disordered region spans residues 212–232 (SLKDKRDRRNSSQPENKKSAG). Ser233 functions as the Proton donor in the catalytic mechanism. Glu310 is an active-site residue.

This sequence belongs to the MurB family. FAD is required as a cofactor.

The protein localises to the cytoplasm. It catalyses the reaction UDP-N-acetyl-alpha-D-muramate + NADP(+) = UDP-N-acetyl-3-O-(1-carboxyvinyl)-alpha-D-glucosamine + NADPH + H(+). Its pathway is cell wall biogenesis; peptidoglycan biosynthesis. In terms of biological role, cell wall formation. This is UDP-N-acetylenolpyruvoylglucosamine reductase from Leptospira interrogans serogroup Icterohaemorrhagiae serovar Lai (strain 56601).